The sequence spans 468 residues: Citrate synthase, mitochondrial (468 aa).

The N-terminal 30 residues, 1-30, are a transit peptide targeting the mitochondrion; the sequence is MSLITAGRLCARILGAKNSPCALIAARQAS. Active-site residues include H303 and H349. R358 provides a ligand contact to oxaloacetate. D404 is an active-site residue. Oxaloacetate contacts are provided by R430 and R450.

The protein belongs to the citrate synthase family. As to quaternary structure, homodimer.

It localises to the mitochondrion matrix. The enzyme catalyses oxaloacetate + acetyl-CoA + H2O = citrate + CoA + H(+). It functions in the pathway carbohydrate metabolism; tricarboxylic acid cycle; isocitrate from oxaloacetate: step 1/2. Key enzyme of the Krebs tricarboxylic acid cycle which catalyzes the synthesis of citrate from acetyl coenzyme A and oxaloacetate. The sequence is that of Citrate synthase, mitochondrial (cs) from Xenopus tropicalis (Western clawed frog).